A 190-amino-acid chain; its full sequence is C-type lectin domain family 5 member A (190 aa).

At 1 to 4 (MNWH) the chain is on the cytoplasmic side. The helical; Signal-anchor for type II membrane protein transmembrane segment at 5 to 25 (MIISGLIVVVIKVVGMTFFLL) threads the bilayer. The Extracellular segment spans residues 26 to 190 (YFPQVFGKSN…YRWICEMNAK (165 aa)). 3 N-linked (GlcNAc...) asparagine glycosylation sites follow: asparagine 51, asparagine 146, and asparagine 153. The C-type lectin domain occupies 80-186 (HQGKCFFFSF…CEVSYRWICE (107 aa)). 2 disulfide bridges follow: cysteine 101–cysteine 185 and cysteine 163–cysteine 177.

As to quaternary structure, monomer. Homodimer. The majority of CLEC5A is expressed as a monomeric form on macrophages. Interacts with TYROBP/DAP12. The interaction with TYROBP is required for CLEC5 cell surface expression. Interacts with HCST/DAP10. Forms a CLEC5A/TYROBP/HCST trimolecular complex depending almost solely on TYROBP. Post-translationally, N-glycosylated. Contains sialic acid residues. Strong expression in bone marrow cells and thioglycollate-induced neutrophils (at protein level). Expressed on granulocytes and monocytes from bone marrow and peripheral blood. Expressed in macrophage cell line J-774, but not in T-cell lines, B-cell lines, or mast cell lines.

It is found in the cell membrane. In terms of biological role, functions as a positive regulator of osteoclastogenesis. Cell surface receptor that signals via TYROBP. Regulates inflammatory responses. This chain is C-type lectin domain family 5 member A (Clec5a), found in Mus musculus (Mouse).